Here is a 197-residue protein sequence, read N- to C-terminus: Transcription factor FapR (197 aa).

This sequence belongs to the FapR family.

Its function is as follows. Transcriptional factor involved in regulation of membrane lipid biosynthesis by repressing genes involved in fatty acid and phospholipid metabolism. The protein is Transcription factor FapR of Bacillus cereus (strain 03BB102).